A 432-amino-acid chain; its full sequence is Alcohol acyltransferase 9 (432 aa).

Residues His-156 and Asp-379 each act as proton acceptor in the active site.

Belongs to the plant acyltransferase family. In terms of tissue distribution, expressed in fruit.

The catalysed reaction is 2-(methylsulfanyl)acetyl-CoA + butan-1-ol = butyl 2-(methylsulfanyl)acetate + CoA. The enzyme catalyses ethanol + acetyl-CoA = ethyl acetate + CoA. It catalyses the reaction butan-1-ol + acetyl-CoA = butyl acetate + CoA. It carries out the reaction butan-1-ol + propanoyl-CoA = butyl propanoate + CoA. Its function is as follows. Involved in the biosynthesis of volatile esters which confer kiwifruit flavor. Alcohol acyl transferase that can use a wide range of alcohols as substrate to produce esters. Exhibits acetyl-CoA:alcohol O-acyltransferase activity. In Actinidia deliciosa (Kiwi), this protein is Alcohol acyltransferase 9.